Consider the following 270-residue polypeptide: MIOREX complex component 3 (270 aa).

A mitochondrion-targeting transit peptide spans 1–12 (MSRTIPFLFKLV).

As to quaternary structure, associates with the mitochondrial ribosome.

The protein resides in the mitochondrion. Functionally, component of MIOREX complexes, large expressome-like assemblies of ribosomes with factors involved in all the steps of post-transcriptional gene expression. The polypeptide is MIOREX complex component 3 (Saccharomyces cerevisiae (strain ATCC 204508 / S288c) (Baker's yeast)).